The primary structure comprises 441 residues: Ribulose bisphosphate carboxylase large chain (441 aa).

Residues N89 and T139 each contribute to the substrate site. The active-site Proton acceptor is K141. K143 is a substrate binding site. Mg(2+) contacts are provided by K167, D169, and E170. At K167 the chain carries N6-carboxylysine. Residue H260 is the Proton acceptor of the active site. Substrate is bound by residues X261 and S345.

It belongs to the RuBisCO large chain family. Type I subfamily. Heterohexadecamer of 8 large chains and 8 small chains; disulfide-linked. The disulfide link is formed within the large subunit homodimers. Mg(2+) serves as cofactor. Post-translationally, the disulfide bond which can form in the large chain dimeric partners within the hexadecamer appears to be associated with oxidative stress and protein turnover.

The protein localises to the plastid. Its subcellular location is the chloroplast. It catalyses the reaction 2 (2R)-3-phosphoglycerate + 2 H(+) = D-ribulose 1,5-bisphosphate + CO2 + H2O. The catalysed reaction is D-ribulose 1,5-bisphosphate + O2 = 2-phosphoglycolate + (2R)-3-phosphoglycerate + 2 H(+). Functionally, ruBisCO catalyzes two reactions: the carboxylation of D-ribulose 1,5-bisphosphate, the primary event in carbon dioxide fixation, as well as the oxidative fragmentation of the pentose substrate in the photorespiration process. Both reactions occur simultaneously and in competition at the same active site. The sequence is that of Ribulose bisphosphate carboxylase large chain from Asclepias exaltata (Poke milkweed).